A 467-amino-acid chain; its full sequence is Chlorophenol O-methyltransferase (467 aa).

The interval 1–41 (MAELRAPSSLSTERNGSASNTDVDKQKLNHLYQNGNKKTGS) is disordered. 2 stretches are compositionally biased toward polar residues: residues 8-21 (SSLS…ASNT) and 31-41 (LYQNGNKKTGS). Residue Asp320 participates in S-adenosyl-L-methionine binding. His368 serves as the catalytic Proton acceptor.

It belongs to the class I-like SAM-binding methyltransferase superfamily. Cation-independent O-methyltransferase family.

The catalysed reaction is 2,4,6-trichlorophenol + S-adenosyl-L-methionine = 2,4,6-trichloroanisole + S-adenosyl-L-homocysteine. With respect to regulation, S-adenosyl-L-homocysteine acts as a competitive inhibitor. Also strongly inhibited by low concentrations of several metal ions, such as Cu(2+), Hg(2+), Zn(2+), and Ag(+), and to a lesser extent by p-chloromercuribenzoic acid, but it is not significantly affected by several thiols or other thiol reagents. Functionally, chlorophenol O-methyltransferase that methylates chlorophenols into chloroanisoles which are thought to be responsible for cork taint of wines. The only single chlorophenol (CP) methylated is 2-CP; neither 3-CP nor 4-CP are effective substrates. Within the dichlorophenols (DCPs), 2,4-DCP supports the highest rate of O-methylation, and the activity decreases in the following order: 2,3-DCP, 2,5-DCP, 2,6-DCP, and 3,4-DCP. Within the trichlorophenol (TCP) group, the maximal activity is observed with 2,3,4-TCP, whereas there is increasingly reduced activity with 2,4,5-TCP, 2,4,6-TCP, and 2,3,6-TCP. The only tetrachlorophenol (TeCP) that is methylated is 2,3,4,5-TeCP, since no activity can be detected with 2,3,4,6-TeCP and 2,3,5,6-TeCP. Is also able to methylate other halogenated phenols containing fluoro or bromo substituents, whereas other hydroxylated compounds, such as hydroxylated benzoic acids, hydroxybenzaldehydes, phenol, 2-metoxyphenol, and dihydroxybenzene, were not methylated. In Trichoderma longibrachiatum, this protein is Chlorophenol O-methyltransferase.